Reading from the N-terminus, the 255-residue chain is Indole-3-glycerol phosphate synthase (255 aa).

The protein belongs to the TrpC family.

It catalyses the reaction 1-(2-carboxyphenylamino)-1-deoxy-D-ribulose 5-phosphate + H(+) = (1S,2R)-1-C-(indol-3-yl)glycerol 3-phosphate + CO2 + H2O. It participates in amino-acid biosynthesis; L-tryptophan biosynthesis; L-tryptophan from chorismate: step 4/5. In Streptococcus pneumoniae (strain Hungary19A-6), this protein is Indole-3-glycerol phosphate synthase.